A 101-amino-acid polypeptide reads, in one-letter code: Small ribosomal subunit protein uS14 (101 aa).

Belongs to the universal ribosomal protein uS14 family. In terms of assembly, part of the 30S ribosomal subunit. Contacts proteins S3 and S10.

In terms of biological role, binds 16S rRNA, required for the assembly of 30S particles and may also be responsible for determining the conformation of the 16S rRNA at the A site. The protein is Small ribosomal subunit protein uS14 of Burkholderia lata (strain ATCC 17760 / DSM 23089 / LMG 22485 / NCIMB 9086 / R18194 / 383).